The primary structure comprises 246 residues: Sugar fermentation stimulation protein homolog (246 aa).

This sequence belongs to the SfsA family.

This chain is Sugar fermentation stimulation protein homolog, found in Prochlorococcus marinus (strain MIT 9312).